Reading from the N-terminus, the 264-residue chain is S-adenosylmethionine decarboxylase proenzyme (264 aa).

The active-site Schiff-base intermediate with substrate; via pyruvic acid is the Ser-112. The residue at position 112 (Ser-112) is a Pyruvic acid (Ser); by autocatalysis. His-117 (proton acceptor; for processing activity) is an active-site residue. Cys-140 (proton donor; for catalytic activity) is an active-site residue.

The protein belongs to the prokaryotic AdoMetDC family. Type 2 subfamily. Heterooctamer of four alpha and four beta chains arranged as a tetramer of alpha/beta heterodimers. Pyruvate serves as cofactor. Is synthesized initially as an inactive proenzyme. Formation of the active enzyme involves a self-maturation process in which the active site pyruvoyl group is generated from an internal serine residue via an autocatalytic post-translational modification. Two non-identical subunits are generated from the proenzyme in this reaction, and the pyruvate is formed at the N-terminus of the alpha chain, which is derived from the carboxyl end of the proenzyme. The post-translation cleavage follows an unusual pathway, termed non-hydrolytic serinolysis, in which the side chain hydroxyl group of the serine supplies its oxygen atom to form the C-terminus of the beta chain, while the remainder of the serine residue undergoes an oxidative deamination to produce ammonia and the pyruvoyl group blocking the N-terminus of the alpha chain.

It catalyses the reaction S-adenosyl-L-methionine + H(+) = S-adenosyl 3-(methylsulfanyl)propylamine + CO2. It participates in amine and polyamine biosynthesis; S-adenosylmethioninamine biosynthesis; S-adenosylmethioninamine from S-adenosyl-L-methionine: step 1/1. Its function is as follows. Catalyzes the decarboxylation of S-adenosylmethionine to S-adenosylmethioninamine (dcAdoMet), the propylamine donor required for the synthesis of the polyamines spermine and spermidine from the diamine putrescine. The polypeptide is S-adenosylmethionine decarboxylase proenzyme (Hamiltonella defensa subsp. Acyrthosiphon pisum (strain 5AT)).